Consider the following 271-residue polypeptide: Neurexophilin-1 (271 aa).

An N-terminal signal peptide occupies residues 1–21; sequence MQAACWYVLLLLQPTVYLVTC. An II region spans residues 22 to 97; that stretch reads ANLTNGGKSE…WDWLRNSTDL (76 aa). N-linked (GlcNAc...) asparagine glycans are attached at residues asparagine 23, asparagine 68, asparagine 93, asparagine 146, asparagine 156, and asparagine 162. An III region spans residues 98-176; the sequence is QEPRPRAKRR…LVPPTKIVEF (79 aa). The interval 177–185 is IV (linker domain); it reads DLAQQTVID. Residues 186-271 form a v (Cys-rich) region; it reads AKDSKSFNCR…HSDTPYFPSG (86 aa).

The protein belongs to the neurexophilin family. Post-translationally, may be proteolytically processed at the boundary between the N-terminal non-conserved and the central conserved domain in neuron-like cells. In terms of tissue distribution, highest level in brain.

The protein resides in the secreted. May be signaling molecules that resemble neuropeptides. Ligand for alpha-neurexins. The protein is Neurexophilin-1 (Nxph1) of Rattus norvegicus (Rat).